Here is a 199-residue protein sequence, read N- to C-terminus: Carbon disulfide hydrolase (199 aa).

Positions 36, 91, and 94 each coordinate Zn(2+).

This sequence belongs to the beta-class carbonic anhydrase family. Exists as both octamers and hexadecamers in solution. The hexadecameric homooligomer may form a catenane, through interactions of two interlocked octameric rings. Requires Zn(2+) as cofactor.

It catalyses the reaction carbon disulfide + 2 H2O = 2 hydrogen sulfide + CO2 + 2 H(+). The protein operates within sulfur metabolism; hydrogen sulfide biosynthesis. Functionally, catalyzes the conversion of carbon disulfide into hydrogen sulfide and carbon dioxide, with carbonyl sulfide as an intermediate. Likely plays a key role in sulfur metabolism that allows A.thiooxidans G8 to grow on carbon disulfide as the main carbon and energy source. Does not show carbonic anhydrase activity (hydration of CO(2) to carbonate). This Acidithiobacillus thiooxidans (Thiobacillus thiooxidans) protein is Carbon disulfide hydrolase.